We begin with the raw amino-acid sequence, 97 residues long: DNA-binding protein NEQ150 (97 aa).

The protein belongs to the PDCD5 family.

The chain is DNA-binding protein NEQ150 from Nanoarchaeum equitans (strain Kin4-M).